Consider the following 89-residue polypeptide: MQLTKTQFVRCVFLLLANSKKYTIPQAVRISYRLLDKTRVSLKTKERLLVLLDALESGKITPREFTKRLFLEYPKPSDKVKVLSLKIFE.

An N-terminal signal peptide occupies residues 1-19; the sequence is MQLTKTQFVRCVFLLLANS.

This is an uncharacterized protein from Sulfolobus islandicus filamentous virus (isolate Iceland/Hveragerdi) (SIFV).